We begin with the raw amino-acid sequence, 305 residues long: Oxygen-dependent coproporphyrinogen-III oxidase (305 aa).

Serine 99 lines the substrate pocket. Residues histidine 103 and histidine 113 each coordinate a divalent metal cation. Histidine 113 (proton donor) is an active-site residue. Residue 115–117 (NVR) participates in substrate binding. A divalent metal cation-binding residues include histidine 152 and histidine 182. Residues 247-282 (YVEFNLVLDRGTLFGLQTGGRTESILMSMPPLARWE) are important for dimerization. A substrate-binding site is contributed by 265–267 (GGR).

This sequence belongs to the aerobic coproporphyrinogen-III oxidase family. In terms of assembly, homodimer. Requires a divalent metal cation as cofactor.

It localises to the cytoplasm. The enzyme catalyses coproporphyrinogen III + O2 + 2 H(+) = protoporphyrinogen IX + 2 CO2 + 2 H2O. It participates in porphyrin-containing compound metabolism; protoporphyrin-IX biosynthesis; protoporphyrinogen-IX from coproporphyrinogen-III (O2 route): step 1/1. Its function is as follows. Involved in the heme biosynthesis. Catalyzes the aerobic oxidative decarboxylation of propionate groups of rings A and B of coproporphyrinogen-III to yield the vinyl groups in protoporphyrinogen-IX. The sequence is that of Oxygen-dependent coproporphyrinogen-III oxidase from Vibrio cholerae serotype O1 (strain M66-2).